Reading from the N-terminus, the 450-residue chain is Calcium-binding and coiled-coil domain-containing protein 2 (450 aa).

Residues 133-136 (ILVV) carry the CLIR motif. Positions 135 to 349 (VVTTQSEVEE…RENNRLLSYM (215 aa)) form a coiled coil. Residues 203–206 (DCWE) carry the LIR-like motif. The tract at residues 371–381 (DPGLVFGNPYS) is interaction with LGALS8. The tract at residues 395 to 450 (KKCPTCKSDFAADVFDHNLALEQHLQTLSLNCPICDKTFPAKEKQIFEDHVFCHTL) is interaction with MYO6. The UBZ1-type zinc finger occupies 423–448 (SLNCPICDKTFPAKEKQIFEDHVFCH). 4 residues coordinate Zn(2+): C426, C429, H444, and H448.

This sequence belongs to the CALCOCO family. Dimer. Part of a complex consisting of CALCOCO2, TAX1BP1 and MYO6. Interacts with GEMIN4. Interacts with ATG8 family members MAP1LC3A, MAP1LC3B, GABARAP, GABARAPL1 and GABARAPL2. Interacts with ATG8 family member MAP1LC3C. Interacts with LGALS8. Interacts with TOM1; the interaction is indirect and is mediated by MYO6, which acts as a bridge between TOM1 and CALCOCO2. Interacts with AZI2.

It localises to the cytoplasm. The protein resides in the perinuclear region. It is found in the cytoskeleton. Its subcellular location is the cytoplasmic vesicle. The protein localises to the autophagosome membrane. Functionally, xenophagy-specific receptor required for autophagy-mediated intracellular bacteria degradation. Acts as an effector protein of galectin-sensed membrane damage that restricts the proliferation of infecting pathogens upon entry into the cytosol by targeting LGALS8-associated bacteria for autophagy. Initially orchestrates bacteria targeting to autophagosomes and subsequently ensures pathogen degradation by regulating pathogen-containing autophagosome maturation. Bacteria targeting to autophagosomes relies on its interaction with MAP1LC3A, MAP1LC3B and/or GABARAPL2, whereas regulation of pathogen-containing autophagosome maturation requires the interaction with MAP3LC3C. May play a role in ruffle formation and actin cytoskeleton organization and seems to negatively regulate constitutive secretion. The protein is Calcium-binding and coiled-coil domain-containing protein 2 of Bos taurus (Bovine).